The sequence spans 382 residues: Galactose-1-phosphate uridylyltransferase (382 aa).

The Zn(2+) site is built by C52 and C55. UDP-alpha-D-glucose is bound by residues A61 and 77 to 78 (ND). Position 121 (H121) interacts with Zn(2+). N185 contacts UDP-alpha-D-glucose. H196 lines the Zn(2+) pocket. The active-site Tele-UMP-histidine intermediate is the H198. Q200 is a binding site for UDP-alpha-D-glucose. The Fe cation site is built by E214, H313, H330, and H332. Residues 345–348 (KFLV) and 350–351 (FE) contribute to the UDP-alpha-D-glucose site.

The protein belongs to the galactose-1-phosphate uridylyltransferase type 1 family. In terms of assembly, homodimer. The cofactor is Zn(2+).

The catalysed reaction is alpha-D-galactose 1-phosphate + UDP-alpha-D-glucose = alpha-D-glucose 1-phosphate + UDP-alpha-D-galactose. The protein operates within carbohydrate metabolism; galactose metabolism. Essential for growth on galactose but not for cellulase induction. The sequence is that of Galactose-1-phosphate uridylyltransferase (gal7) from Hypocrea jecorina (Trichoderma reesei).